A 266-amino-acid polypeptide reads, in one-letter code: Diphthine synthase (266 aa).

Residues L9, D84, V87, 112-113 (SI), L169, A210, and H235 each bind S-adenosyl-L-methionine.

The protein belongs to the diphthine synthase family. As to quaternary structure, homodimer.

It catalyses the reaction 2-[(3S)-amino-3-carboxypropyl]-L-histidyl-[translation elongation factor 2] + 3 S-adenosyl-L-methionine = diphthine-[translation elongation factor 2] + 3 S-adenosyl-L-homocysteine + 3 H(+). The protein operates within protein modification; peptidyl-diphthamide biosynthesis. In terms of biological role, S-adenosyl-L-methionine-dependent methyltransferase that catalyzes the trimethylation of the amino group of the modified target histidine residue in translation elongation factor 2 (EF-2), to form an intermediate called diphthine. The three successive methylation reactions represent the second step of diphthamide biosynthesis. This Methanosarcina acetivorans (strain ATCC 35395 / DSM 2834 / JCM 12185 / C2A) protein is Diphthine synthase.